The chain runs to 484 residues: tRNA sulfurtransferase (484 aa).

In terms of domain architecture, THUMP spans 61–165 (ILLVELLGRI…NDKMMLIKAR (105 aa)). ATP-binding positions include 183–184 (LI), Lys-265, Gly-287, and Gln-296. Cys-344 and Cys-456 are joined by a disulfide. The region spanning 404–484 (LSANDVILDI…DNVKVLNKIS (81 aa)) is the Rhodanese domain. Cys-456 serves as the catalytic Cysteine persulfide intermediate.

Belongs to the ThiI family.

It is found in the cytoplasm. The enzyme catalyses [ThiI sulfur-carrier protein]-S-sulfanyl-L-cysteine + a uridine in tRNA + 2 reduced [2Fe-2S]-[ferredoxin] + ATP + H(+) = [ThiI sulfur-carrier protein]-L-cysteine + a 4-thiouridine in tRNA + 2 oxidized [2Fe-2S]-[ferredoxin] + AMP + diphosphate. It carries out the reaction [ThiS sulfur-carrier protein]-C-terminal Gly-Gly-AMP + S-sulfanyl-L-cysteinyl-[cysteine desulfurase] + AH2 = [ThiS sulfur-carrier protein]-C-terminal-Gly-aminoethanethioate + L-cysteinyl-[cysteine desulfurase] + A + AMP + 2 H(+). It participates in cofactor biosynthesis; thiamine diphosphate biosynthesis. Its function is as follows. Catalyzes the ATP-dependent transfer of a sulfur to tRNA to produce 4-thiouridine in position 8 of tRNAs, which functions as a near-UV photosensor. Also catalyzes the transfer of sulfur to the sulfur carrier protein ThiS, forming ThiS-thiocarboxylate. This is a step in the synthesis of thiazole, in the thiamine biosynthesis pathway. The sulfur is donated as persulfide by IscS. In Histophilus somni (strain 129Pt) (Haemophilus somnus), this protein is tRNA sulfurtransferase.